The sequence spans 1174 residues: MITIDGNGAVASVAFRTSEVIAIYPITPSSTMAEQADAWAGNGLKNVWGDTPRVVEMQSEAGAIATVHGALQTGALSTSFTSSQGLLLMIPTLYKLAGELTPFVLHVAARTVATHALSIFGDHSDVMAVRQTGCAMLCAANVQEAQDFALISQIATLKSRVPFIHFFDGFRTSHEINKIVPLADDTILDLMPQVEIDAHRARALNPEHPVIRGTSANPDTYFQSREATNPWYNAVYDHVEQAMNDFSAATGRQYQPFEYYGHPQAERVIILMGSAIGTCEEVVDELLTRGEKVGVLKVRLYRPFSAKHLLQALPGSVRSVAVLDRTKEPGAQAEPLYLDVMTALAEAFNNGERETLPRVIGGRYGLSSKEFGPDCVLAVFAELNAAKPKARFTVGIYDDVTNLSLPLPENTLPNSAKLEALFYGLGSDGSVSATKNNIKIIGNSTPWYAQGYFVYDSKKAGGLTVSHLRVSEQPIRSAYLISQADFVGCHQLQFIDKYQMAERLKPGGIFLLNTPYSADEVWSRLPQEVQAVLNQKKARFYVINAAKIARECGLAARINTVMQMAFFHLTQILPGDSALAELQGAIAKSYSSKGQDLVERNWQALALARESVEEVPLQPVNPHSANRPPVVSDAAPDFVKTVTAAMLAGLGDALPVSALPPDGTWPMGTTRWEKRNIAEEIPIWKEELCTQCNHCVAACPHSAIRAKVVPPEAMENAPASLHSLDVKSRDMRGQKYVLQVAPEDCTGCNLCVEVCPAKDRQNPEIKAINMMSRLEHVEEEKINYDFFLNLPEIDRSKLERIDIRTSQLITPLFEYSGACSGCGETPYIKLLTQLYGDRMLIANATGCSSIYGGNLPSTPYTTDANGRGPAWANSLFEDNAEFGLGFRLTVDQHRVRVLRLLDQFADKIPAELLTALKSDATPEVRREQVAALRQQLNDVAEAHELLRDADALVEKSIWLIGGDGWAYDIGFGGLDHVLSLTENVNILVLDTQCYSNTGGQASKATPLGAVTKFGEHGKRKARKDLGVSMMMYGHVYVAQISLGAQLNQTVKAIQEAEAYPGPSLIIAYSPCEEHGYDLALSHDQMRQLTATGFWPLYRFDPRRADEGKLPLALDSRPPSEAPEETLLHEQRFRRLNSQQPEVAEQLWKDAAADLQKRYDFLAQMAGKAEKSNTD.

4Fe-4S ferredoxin-type domains follow at residues 680 to 709 (EIPI…AKVV) and 736 to 765 (YVLQ…NPEI). Cysteine 689, cysteine 692, cysteine 695, cysteine 699, cysteine 745, cysteine 748, cysteine 751, cysteine 755, cysteine 819, cysteine 822, cysteine 847, and cysteine 1071 together coordinate [4Fe-4S] cluster.

It belongs to the pyruvate:ferredoxin/flavodoxin oxidoreductase family. [4Fe-4S] cluster is required as a cofactor.

It carries out the reaction oxidized [flavodoxin] + pyruvate + CoA + 2 H(+) = reduced [flavodoxin] + acetyl-CoA + CO2. Oxidoreductase required for the transfer of electrons from pyruvate to flavodoxin. The polypeptide is Probable pyruvate-flavodoxin oxidoreductase (ydbK) (Escherichia coli (strain K12)).